Reading from the N-terminus, the 393-residue chain is Elongation factor Tu (393 aa).

The tr-type G domain occupies 10–203 (KPHVNIGTIG…AVDSYIPEPV (194 aa)). The G1 stretch occupies residues 19–26 (GHVDHGKT). 19–26 (GHVDHGKT) contributes to the GTP binding site. Thr-26 lines the Mg(2+) pocket. The tract at residues 60–64 (GITIS) is G2. A G3 region spans residues 81 to 84 (DCPG). GTP contacts are provided by residues 81–85 (DCPGH) and 136–139 (NKVD). Positions 136–139 (NKVD) are G4. Residues 173–175 (SAL) form a G5 region.

This sequence belongs to the TRAFAC class translation factor GTPase superfamily. Classic translation factor GTPase family. EF-Tu/EF-1A subfamily. Monomer.

The protein localises to the cytoplasm. It catalyses the reaction GTP + H2O = GDP + phosphate + H(+). Its function is as follows. GTP hydrolase that promotes the GTP-dependent binding of aminoacyl-tRNA to the A-site of ribosomes during protein biosynthesis. The sequence is that of Elongation factor Tu from Prosthecochloris aestuarii (strain DSM 271 / SK 413).